Consider the following 125-residue polypeptide: Crustacean hyperglycemic hormones 5 (125 aa).

Residues 1-34 (MKPGNTSFNMVSFRMVWTAMMATLLVAGASSAGT) form the signal peptide. Cystine bridges form between C58–C94, C74–C90, and C77–C103. V123 is modified (valine amide).

It belongs to the arthropod CHH/MIH/GIH/VIH hormone family. As to expression, produced by the medulla terminalis X-organ in the eyestalks and transported to the sinus gland where they are stored and released.

The protein resides in the secreted. Hormone found in the sinus gland of isopods and decapods which controls the blood sugar level. Has a secretagogue action over the amylase released from the midgut gland. May act as a stress hormone and may be involved in the control of molting and reproduction. This is Crustacean hyperglycemic hormones 5 from Penaeus japonicus (Kuruma prawn).